A 281-amino-acid chain; its full sequence is sn-glycerol-3-phosphate transport system permease protein UgpE (281 aa).

6 consecutive transmembrane segments (helical) span residues Leu16–Leu36, Phe85–Phe105, Phe113–Val133, Leu142–Phe162, Ala202–Ile222, and Trp247–Val267. One can recognise an ABC transmembrane type-1 domain in the interval Leu77–Met268.

This sequence belongs to the binding-protein-dependent transport system permease family. UgpAE subfamily. In terms of assembly, the complex is composed of two ATP-binding proteins (UgpC), two transmembrane proteins (UgpA and UgpE) and a solute-binding protein (UgpB).

It is found in the cell inner membrane. In terms of biological role, part of the ABC transporter complex UgpBAEC involved in sn-glycerol-3-phosphate (G3P) import. Probably responsible for the translocation of the substrate across the membrane. This is sn-glycerol-3-phosphate transport system permease protein UgpE (ugpE) from Shigella dysenteriae serotype 1 (strain Sd197).